A 226-amino-acid polypeptide reads, in one-letter code: ATP synthase F(0) complex subunit a (226 aa).

Transmembrane regions (helical) follow at residues 11–31, 68–88, 97–117, 138–158, 164–184, and 189–209; these read APSM…SILF, WALM…LGLL, QLSM…ITGF, IPML…ALAV, ITAG…LINI, and AFIT…VALI.

It belongs to the ATPase A chain family. As to quaternary structure, component of the ATP synthase complex composed at least of ATP5F1A/subunit alpha, ATP5F1B/subunit beta, ATP5MC1/subunit c (homooctomer), MT-ATP6/subunit a, MT-ATP8/subunit 8, ATP5ME/subunit e, ATP5MF/subunit f, ATP5MG/subunit g, ATP5MK/subunit k, ATP5MJ/subunit j, ATP5F1C/subunit gamma, ATP5F1D/subunit delta, ATP5F1E/subunit epsilon, ATP5PF/subunit F6, ATP5PB/subunit b, ATP5PD/subunit d, ATP5PO/subunit OSCP. ATP synthase complex consists of a soluble F(1) head domain (subunits alpha(3) and beta(3)) - the catalytic core - and a membrane F(0) domain - the membrane proton channel (subunits c, a, 8, e, f, g, k and j). These two domains are linked by a central stalk (subunits gamma, delta, and epsilon) rotating inside the F1 region and a stationary peripheral stalk (subunits F6, b, d, and OSCP). Interacts with DNAJC30; interaction is direct.

Its subcellular location is the mitochondrion inner membrane. The catalysed reaction is H(+)(in) = H(+)(out). Functionally, subunit a, of the mitochondrial membrane ATP synthase complex (F(1)F(0) ATP synthase or Complex V) that produces ATP from ADP in the presence of a proton gradient across the membrane which is generated by electron transport complexes of the respiratory chain. ATP synthase complex consist of a soluble F(1) head domain - the catalytic core - and a membrane F(1) domain - the membrane proton channel. These two domains are linked by a central stalk rotating inside the F(1) region and a stationary peripheral stalk. During catalysis, ATP synthesis in the catalytic domain of F(1) is coupled via a rotary mechanism of the central stalk subunits to proton translocation. With the subunit c (ATP5MC1), forms the proton-conducting channel in the F(0) domain, that contains two crucial half-channels (inlet and outlet) that facilitate proton movement from the mitochondrial intermembrane space (IMS) into the matrix. Protons are taken up via the inlet half-channel and released through the outlet half-channel, following a Grotthuss mechanism. This is ATP synthase F(0) complex subunit a from Canis lupus familiaris (Dog).